We begin with the raw amino-acid sequence, 517 residues long: UPF0522 protein B (517 aa).

The signal sequence occupies residues 1-19 (MNKTIILLLISIIFEIVIS). Residues Asn-148, Asn-245, Asn-333, Asn-345, Asn-370, Asn-423, Asn-432, and Asn-495 are each glycosylated (N-linked (GlcNAc...) asparagine).

It belongs to the UPF0522 family.

It localises to the secreted. The sequence is that of UPF0522 protein B from Dictyostelium discoideum (Social amoeba).